Reading from the N-terminus, the 489-residue chain is E3 ubiquitin-protein ligase RGLG1 (489 aa).

The segment covering 1-10 has biased composition (basic and acidic residues); sequence MGGGNSKEES. Positions 1-125 are disordered; the sequence is MGGGNSKEES…SQSQVADRKK (125 aa). The N-myristoyl glycine moiety is linked to residue Gly-2. The span at 11–23 shows a compositional bias: low complexity; it reads SSPSSSSWASHQS. Pro residues predominate over residues 34–57; sequence YPPPPTYAPAPSPAPAPAPVPAPS. The segment covering 58 to 75 has biased composition (low complexity); the sequence is PASSYGPQYSQEGYASQP. The segment covering 76–88 has biased composition (pro residues); the sequence is NNPPPPTYAPAPS. One can recognise a VWFA domain in the interval 156-376; the sequence is NLIVGIDFTK…KETEFALSAL (221 aa). The RING-type zinc finger occupies 446 to 479; the sequence is CPICLSNPKNMAFGCGHQTCCECGPDLKVCPICR.

Interacts with the heterodimer UBC35/UEV1B. Interacts with ERF053. Interacts with PP2CA. Post-translationally, N-myristoylated. As to expression, ubiquitously expressed.

The protein localises to the cell membrane. The protein resides in the nucleus. It catalyses the reaction S-ubiquitinyl-[E2 ubiquitin-conjugating enzyme]-L-cysteine + [acceptor protein]-L-lysine = [E2 ubiquitin-conjugating enzyme]-L-cysteine + N(6)-ubiquitinyl-[acceptor protein]-L-lysine.. In terms of biological role, E3 ubiquitin-protein ligase that mediates the formation of 'Lys-63'-linked ubiquitin chains. Regulates apical dominance by acting on the auxin transport proteins abundance. Together with RGLG5, mediates the ubiquitination and subsequent proteasomal degradation of the target protein PP2CA. Functions as a positive regulator of abscisic acid (ABA) signaling through ABA-dependent degradation of PP2CA, a major inhibitor of ABA signaling. Acts as a negative regulator of drought stress response. The chain is E3 ubiquitin-protein ligase RGLG1 from Arabidopsis thaliana (Mouse-ear cress).